Reading from the N-terminus, the 291-residue chain is Gamma-sarcoglycan (291 aa).

Over 1 to 37 (MVREQYTTATEGICIERPENQYVYKIGIYGWRKRCLY) the chain is Cytoplasmic. Residues 38-58 (LFVLLLLIILVVNLALTIWIL) traverse the membrane as a helical; Signal-anchor for type II membrane protein segment. Residues 59–291 (KVMWFSPAGM…TCQEHNHICL (233 aa)) are Extracellular-facing. N-linked (GlcNAc...) asparagine glycosylation is present at asparagine 110. Disulfide bonds link cysteine 265/cysteine 290 and cysteine 267/cysteine 283.

Belongs to the sarcoglycan beta/delta/gamma/zeta family. As to quaternary structure, interacts with the syntrophin SNTA1. Cross-link to form 2 major subcomplexes: one consisting of SGCB, SGCD and SGCG and the other consisting of SGCB and SGCD. The association between SGCB and SGCG is particularly strong while SGCA is loosely associated with the other sarcoglycans. Interacts with FLNC. As to expression, expressed in skeletal and heart muscle.

The protein resides in the cell membrane. It is found in the sarcolemma. It localises to the cytoplasm. The protein localises to the cytoskeleton. Its function is as follows. Component of the sarcoglycan complex, a subcomplex of the dystrophin-glycoprotein complex which forms a link between the F-actin cytoskeleton and the extracellular matrix. The protein is Gamma-sarcoglycan (SGCG) of Homo sapiens (Human).